We begin with the raw amino-acid sequence, 447 residues long: N-succinylarginine dihydrolase (447 aa).

Residues 19 to 28, N110, and 137 to 138 each bind substrate; these read AGLSFGNEAS and HR. The active site involves E174. Position 212 (R212) interacts with substrate. H248 is a catalytic residue. Residues D250 and N359 each contribute to the substrate site. The Nucleophile role is filled by C365.

It belongs to the succinylarginine dihydrolase family. In terms of assembly, homodimer.

The catalysed reaction is N(2)-succinyl-L-arginine + 2 H2O + 2 H(+) = N(2)-succinyl-L-ornithine + 2 NH4(+) + CO2. The protein operates within amino-acid degradation; L-arginine degradation via AST pathway; L-glutamate and succinate from L-arginine: step 2/5. In terms of biological role, catalyzes the hydrolysis of N(2)-succinylarginine into N(2)-succinylornithine, ammonia and CO(2). The chain is N-succinylarginine dihydrolase from Escherichia fergusonii (strain ATCC 35469 / DSM 13698 / CCUG 18766 / IAM 14443 / JCM 21226 / LMG 7866 / NBRC 102419 / NCTC 12128 / CDC 0568-73).